The sequence spans 463 residues: Exodeoxyribonuclease 7 large subunit (463 aa).

This sequence belongs to the XseA family. In terms of assembly, heterooligomer composed of large and small subunits.

The protein localises to the cytoplasm. The catalysed reaction is Exonucleolytic cleavage in either 5'- to 3'- or 3'- to 5'-direction to yield nucleoside 5'-phosphates.. Bidirectionally degrades single-stranded DNA into large acid-insoluble oligonucleotides, which are then degraded further into small acid-soluble oligonucleotides. This chain is Exodeoxyribonuclease 7 large subunit, found in Pseudomonas syringae pv. syringae (strain B728a).